The sequence spans 146 residues: VHLSADEKNALATLWGKVNPDELGGEALGRLLVVYPWTQRFFDSFGDLSSATAVMGNPKVKAHGKKVLDSFSDGLKHLDNLKGTFSSLSELHCDKLHVDPENFRLLGNELVLVLALHLGKDFTPQVQAAFQKVVAGVANALAHKYH.

V1 is modified (N-acetylvaline). The Globin domain occupies 2 to 146 (HLSADEKNAL…VANALAHKYH (145 aa)). Phosphoserine is present on S44. K59 is modified (N6-acetyllysine). H63 is a heme b binding site. An N6-acetyllysine modification is found at K82. H92 is a heme b binding site. C93 is subject to S-nitrosocysteine. K144 is subject to N6-acetyllysine.

The protein belongs to the globin family. In terms of assembly, heterotetramer of two alpha chains and two beta chains. In terms of tissue distribution, red blood cells.

Functionally, involved in oxygen transport from the lung to the various peripheral tissues. The chain is Hemoglobin subunit beta from Sciurus carolinensis (Eastern gray squirrel).